Here is a 248-residue protein sequence, read N- to C-terminus: Triosephosphate isomerase (248 aa).

Substrate-binding residues include asparagine 10 and lysine 12. The active-site Electrophile is histidine 95. The active-site Proton acceptor is glutamate 165.

The protein belongs to the triosephosphate isomerase family. Homodimer.

It carries out the reaction D-glyceraldehyde 3-phosphate = dihydroxyacetone phosphate. It functions in the pathway carbohydrate biosynthesis; gluconeogenesis. The protein operates within carbohydrate degradation; glycolysis; D-glyceraldehyde 3-phosphate from glycerone phosphate: step 1/1. The sequence is that of Triosephosphate isomerase (tpi-1) from Neurospora crassa (strain ATCC 24698 / 74-OR23-1A / CBS 708.71 / DSM 1257 / FGSC 987).